A 324-amino-acid chain; its full sequence is Interactor of constitutive active ROPs 4 (324 aa).

4 disordered regions span residues 1–74 (MPKP…SGLE), 91–156 (LAKA…ASKE), 175–201 (SLSEENETLKDQLKKTDTEMSCAKAKE), and 289–324 (FVGSPGMADDSDDGSGKRKSSGKKMFGDLWKKKGQK). Positions 13-28 (QRQSPRLRTSLLSTSS) are enriched in low complexity. 3 stretches are compositionally biased toward basic and acidic residues: residues 29-50 (DPHHLSRPITDRSPKLGLDRRS), 95-106 (EAAKKRAQEELH), and 118-156 (PERDDIPGDGHQETDVFEVLDEKAKESEKTKNDELASKE). The stretch at 62–266 (SQKKLGSRIS…ADAAAAVLSG (205 aa)) forms a coiled coil. The span at 313 to 324 (MFGDLWKKKGQK) shows a compositional bias: basic and acidic residues.

It belongs to the ICR family. In terms of assembly, interacts with ARAC11 in vitro.

Its function is as follows. Acts as a scaffold, mediating interaction of ROPs with different proteins. The polypeptide is Interactor of constitutive active ROPs 4 (ICR4) (Arabidopsis thaliana (Mouse-ear cress)).